Consider the following 233-residue polypeptide: 2-amino-5-formylamino-6-ribosylaminopyrimidin-4(3H)-one 5'-monophosphate deformylase (233 aa).

Fe cation is bound by residues E33, H35, D44, and H114.

It belongs to the creatininase superfamily. FAPy deformylase family. Homodimer. Fe(2+) is required as a cofactor. Zn(2+) serves as cofactor.

It carries out the reaction 2-amino-5-formylamino-6-(5-phospho-D-ribosylamino)pyrimidin-4(3H)-one + H2O = 2,5-diamino-6-(1-D-ribosylamino)pyrimidin-4(3H)-one 5'-phosphate + formate + H(+). It participates in cofactor biosynthesis; coenzyme F420 biosynthesis. Its pathway is cofactor biosynthesis; riboflavin biosynthesis. Functionally, catalyzes the hydrolysis of the formamide of 2-amino-5-formylamino-6-ribosylamino-4(3H)-pyrimidinone 5'-monophosphate (FAPy) to form 2,5-diamino-6-ribosylamino-4(3H)-pyrimidinone 5'-phosphate (APy). The chain is 2-amino-5-formylamino-6-ribosylaminopyrimidin-4(3H)-one 5'-monophosphate deformylase from Methanosphaera stadtmanae (strain ATCC 43021 / DSM 3091 / JCM 11832 / MCB-3).